We begin with the raw amino-acid sequence, 508 residues long: Glycogen synthase (508 aa).

Residue lysine 15 coordinates ADP-alpha-D-glucose. The segment at 483-508 is disordered; the sequence is ARNRAETRPQTASALSYREPRPAAEY.

It belongs to the glycosyltransferase 1 family. Bacterial/plant glycogen synthase subfamily.

It carries out the reaction [(1-&gt;4)-alpha-D-glucosyl](n) + ADP-alpha-D-glucose = [(1-&gt;4)-alpha-D-glucosyl](n+1) + ADP + H(+). It participates in glycan biosynthesis; glycogen biosynthesis. Functionally, synthesizes alpha-1,4-glucan chains using ADP-glucose. In Paracidovorax citrulli (strain AAC00-1) (Acidovorax citrulli), this protein is Glycogen synthase.